Reading from the N-terminus, the 219-residue chain is Redox-sensing transcriptional repressor Rex (219 aa).

A DNA-binding region (H-T-H motif) is located at residues 17–56; it reads RYLRYVEDLLNHDIMRISSSELSQRMGYTASQVRQDFNNF. 91-96 provides a ligand contact to NAD(+); the sequence is GVGNLG.

It belongs to the transcriptional regulatory Rex family. In terms of assembly, homodimer.

It is found in the cytoplasm. Its function is as follows. Modulates transcription in response to changes in cellular NADH/NAD(+) redox state. This is Redox-sensing transcriptional repressor Rex from Caldicellulosiruptor saccharolyticus (strain ATCC 43494 / DSM 8903 / Tp8T 6331).